A 955-amino-acid chain; its full sequence is Leucine--tRNA ligase (955 aa).

Positions 51-61 match the 'HIGH' region motif; it reads PYLNGVLHAGH. A 'KMSKS' region motif is present at residues 647–651; the sequence is KLSKS. Position 650 (lysine 650) interacts with ATP.

It belongs to the class-I aminoacyl-tRNA synthetase family.

Its subcellular location is the cytoplasm. It carries out the reaction tRNA(Leu) + L-leucine + ATP = L-leucyl-tRNA(Leu) + AMP + diphosphate. The protein is Leucine--tRNA ligase of Methanococcus maripaludis (strain C7 / ATCC BAA-1331).